The following is a 356-amino-acid chain: 11-beta-hydroxysteroid dehydrogenase (356 aa).

A helical; Signal-anchor for type II membrane protein transmembrane segment spans residues 10–30; it reads LVVPPAGLLMLAFAWPSLAFF. The Proline-knob signature appears at 13–26; it reads PPAGLLMLAFAWPS. 54-85 is a binding site for NADP(+); it reads GASSGIGEQIAYQYAKRRANLVLVARREHRLR. Ser184 contributes to the substrate binding site. Tyr197 (proton acceptor) is an active-site residue. NADP(+) contacts are provided by residues 197–201 and Lys201; that span reads YNAAK.

This sequence belongs to the short-chain dehydrogenases/reductases (SDR) family. As to expression, expressed in megagametophytes (at protein level).

It is found in the lipid droplet. Its subcellular location is the membrane. The enzyme catalyses an 11beta-hydroxysteroid + NADP(+) = an 11-oxosteroid + NADPH + H(+). The catalysed reaction is corticosterone + NADP(+) = 11-dehydrocorticosterone + NADPH + H(+). It catalyses the reaction 17beta-estradiol + NADP(+) = estrone + NADPH + H(+). In terms of biological role, has dehydrogenase activity against corticosterone (11 beta-hydroxysteroid) and estradiol (17 beta-hydroxysteroid) in the presence of NADP(+). May be involved in signal transduction regulated by various sterols. The polypeptide is 11-beta-hydroxysteroid dehydrogenase (Pinus massoniana (Chinese red pine)).